Consider the following 120-residue polypeptide: Aspartate 1-decarboxylase (120 aa).

Ser25 serves as the catalytic Schiff-base intermediate with substrate; via pyruvic acid. Pyruvic acid (Ser) is present on Ser25. Thr57 lines the substrate pocket. Tyr58 (proton donor) is an active-site residue. Gly73–Ala75 provides a ligand contact to substrate.

Belongs to the PanD family. As to quaternary structure, heterooctamer of four alpha and four beta subunits. Requires pyruvate as cofactor. Post-translationally, is synthesized initially as an inactive proenzyme, which is activated by self-cleavage at a specific serine bond to produce a beta-subunit with a hydroxyl group at its C-terminus and an alpha-subunit with a pyruvoyl group at its N-terminus.

The protein resides in the cytoplasm. It catalyses the reaction L-aspartate + H(+) = beta-alanine + CO2. It participates in cofactor biosynthesis; (R)-pantothenate biosynthesis; beta-alanine from L-aspartate: step 1/1. In terms of biological role, catalyzes the pyruvoyl-dependent decarboxylation of aspartate to produce beta-alanine. This chain is Aspartate 1-decarboxylase, found in Methylibium petroleiphilum (strain ATCC BAA-1232 / LMG 22953 / PM1).